Reading from the N-terminus, the 133-residue chain is Protein U17 (133 aa).

The chain crosses the membrane as a helical span at residues F82–L102.

Its subcellular location is the membrane. The polypeptide is Protein U17 (U17/U16) (Homo sapiens (Human)).